The sequence spans 525 residues: uncharacterized protein (525 aa).

Composition is skewed to polar residues over residues Leu-139–Gly-149 and Ser-336–Ser-349. 2 disordered regions span residues Leu-139 to Pro-158 and Pro-330 to Thr-356.

This is an uncharacterized protein from Treponema pallidum (strain Nichols).